The following is a 255-amino-acid chain: Putative expansin-A27 (255 aa).

Positions 1–24 (MGAMAENLLVLCTILAARMALAAA) are cleaved as a signal peptide. The Expansin-like EG45 domain occupies 45–160 (GGACGYGNLY…RRVRCWRRGG (116 aa)). An Expansin-like CBD domain is found at 170 to 249 (HFELVLVANV…GWKFGQTFST (80 aa)).

This sequence belongs to the expansin family. Expansin A subfamily.

The protein resides in the secreted. It is found in the cell wall. The protein localises to the membrane. Its function is as follows. May cause loosening and extension of plant cell walls by disrupting non-covalent bonding between cellulose microfibrils and matrix glucans. No enzymatic activity has been found. May be required for rapid internodal elongation in deepwater rice during submergence. The chain is Putative expansin-A27 (EXPA27) from Oryza sativa subsp. japonica (Rice).